A 142-amino-acid polypeptide reads, in one-letter code: MKVGGIEDRQLEALKRAALKACELSYSPYSHFRVGCSILTNNDVIFTGANVENASYSNCICAERSAMIQVLMAGHRSGWKCMVICGDSEDQCVSPCGVCRQFINEFVVKDFPIVMLNSTGSRSKVMTMGELLPMAFGPSHLN.

The CMP/dCMP-type deaminase domain maps to 9-139; it reads RQLEALKRAA…ELLPMAFGPS (131 aa). 50–52 is a substrate binding site; it reads NVE. Cys-61 is a binding site for Zn(2+). The active-site Proton donor is Glu-63. Residues Cys-96 and Cys-99 each contribute to the Zn(2+) site.

This sequence belongs to the cytidine and deoxycytidylate deaminase family. As to quaternary structure, homodimer. Zn(2+) is required as a cofactor.

The catalysed reaction is cytidine + H2O + H(+) = uridine + NH4(+). It carries out the reaction 2'-deoxycytidine + H2O + H(+) = 2'-deoxyuridine + NH4(+). Its function is as follows. This enzyme scavenges exogenous and endogenous cytidine and 2'-deoxycytidine for UMP synthesis. This Saccharomyces cerevisiae (strain ATCC 204508 / S288c) (Baker's yeast) protein is Cytidine deaminase (CDD1).